Consider the following 876-residue polypeptide: Alanine--tRNA ligase (876 aa).

K74 is subject to N6-acetyllysine. Residues H564, H568, C666, and H670 each coordinate Zn(2+).

It belongs to the class-II aminoacyl-tRNA synthetase family. As to quaternary structure, homotetramer. The cofactor is Zn(2+).

It is found in the cytoplasm. It carries out the reaction tRNA(Ala) + L-alanine + ATP = L-alanyl-tRNA(Ala) + AMP + diphosphate. Its function is as follows. Catalyzes the attachment of alanine to tRNA(Ala) in a two-step reaction: alanine is first activated by ATP to form Ala-AMP and then transferred to the acceptor end of tRNA(Ala). Also edits incorrectly charged Ser-tRNA(Ala) and Gly-tRNA(Ala) via its editing domain. This chain is Alanine--tRNA ligase, found in Shigella sonnei (strain Ss046).